A 424-amino-acid polypeptide reads, in one-letter code: L-glutamine:scyllo-inosose aminotransferase (424 aa).

The tract at residues 1–21 (MDSSLAISGGPRLSNREWPRW) is disordered. Position 202 is an N6-(pyridoxal phosphate)lysine (Lys-202).

The protein belongs to the DegT/DnrJ/EryC1 family. L-glutamine:2-deoxy-scyllo-inosose/scyllo-inosose aminotransferase subfamily. Homodimer. The cofactor is pyridoxal 5'-phosphate.

The catalysed reaction is scyllo-inosose + L-glutamine = 1-amino-1-deoxy-scyllo-inositol + 2-oxoglutaramate. Its pathway is antibiotic biosynthesis; streptomycin biosynthesis. Its function is as follows. Catalyzes the PLP-dependent transamination of scyllo-inosose to form scyllo-inosamine. The sequence is that of L-glutamine:scyllo-inosose aminotransferase (stsC) from Streptomyces griseus.